A 119-amino-acid polypeptide reads, in one-letter code: Large ribosomal subunit protein uL18 (119 aa).

The protein belongs to the universal ribosomal protein uL18 family. Part of the 50S ribosomal subunit; part of the 5S rRNA/L5/L18/L25 subcomplex. Contacts the 5S and 23S rRNAs.

Functionally, this is one of the proteins that bind and probably mediate the attachment of the 5S RNA into the large ribosomal subunit, where it forms part of the central protuberance. The protein is Large ribosomal subunit protein uL18 of Ruegeria sp. (strain TM1040) (Silicibacter sp.).